The following is a 113-amino-acid chain: UPF0122 protein PEPE_0845 (113 aa).

It belongs to the UPF0122 family.

Might take part in the signal recognition particle (SRP) pathway. This is inferred from the conservation of its genetic proximity to ftsY/ffh. May be a regulatory protein. The chain is UPF0122 protein PEPE_0845 from Pediococcus pentosaceus (strain ATCC 25745 / CCUG 21536 / LMG 10740 / 183-1w).